Reading from the N-terminus, the 527-residue chain is MEPNSSGSGKAAVGDGGGGGAPMLQPAPAPAPMPSANAPPPFLVKTYDMVDDPSTDKIVSWSPTNNSFVVWDPPEFAKDLLPKYFKHNNFSSFVRQLNTYGFRKVDPDRWEFANEGFLRGQKHLLKSISRRKPAHGHAQQQQQPHGHAQQQMQPPGHSASVGACVEVGKFGLEEEVERLKRDKNVLMQELVRLRQQQQSTDNQLQGMVQRLQGMELRQQQMMSFLAKAVNSPGFLAQFVQQQNESNKRIAEGSKKRRIKQDIESQDPSVTPADGQIVKYQPGINEAAKAMLRELSKLDSSPRLENFSNSPESFLIGDGSPQSNASSGRVSGVTLQEVPPTSGKPLLNTASAIAGQSLLPATSEMQSSHLGTCSEIINNQLSNIIPLVGGEDLHPGSLSASDMIMPELSQLQGILPENNTDVIGCDSFMDTIAVEGKMGLDIGSLSPGADIDWQSGLLDEIQEFPSVGDPFWEKFLQSPSSPDAAMDDDISNTSETKPQINGWDKTQNMEHLTEQMGATNIKQQKHMI.

The segment covering 1-13 (MEPNSSGSGKAAV) has biased composition (low complexity). Disordered stretches follow at residues 1-37 (MEPN…PSAN), 130-160 (RRKP…HSAS), 243-275 (NESN…ADGQ), 300-343 (SPRL…TSGK), and 476-501 (QSPS…QING). A compositionally biased stretch (pro residues) spans 25-37 (QPAPAPAPMPSAN). Residues 39–133 (PPPFLVKTYD…LLKSISRRKP (95 aa)) mediate DNA binding. Positions 136-157 (GHAQQQQQPHGHAQQQMQPPGH) are enriched in low complexity. Polar residues-rich tracts occupy residues 319-328 (SPQSNASSGR) and 491-501 (NTSETKPQING).

This sequence belongs to the HSF family. In terms of assembly, homotrimer. Post-translationally, exhibits temperature-dependent phosphorylation.

The protein localises to the nucleus. Its function is as follows. DNA-binding protein that specifically binds heat shock promoter elements (HSE) and activates transcription. This is Heat shock factor protein HSF8 (HSF8) from Solanum peruvianum (Peruvian tomato).